The sequence spans 723 residues: Threonine--tRNA ligase 1, cytoplasmic (723 aa).

A disordered region spans residues 1-46; sequence MFEEKASSPSGKMGGEEKPIGAGEEKQKEGGKKKNKEGSGDGGRAE. Over residues 14 to 39 the composition is skewed to basic and acidic residues; the sequence is GGEEKPIGAGEEKQKEGGKKKNKEGS. The residue at position 39 (Ser-39) is a Phosphoserine. The TGS domain maps to 79-143; it reads DSKPIKVTLP…EEDCTLELLK (65 aa). Lys-243 is modified (N6-acetyllysine). Thr-246 is subject to Phosphothreonine. Position 298 is a phosphotyrosine (Tyr-298). At Thr-453 the chain carries Phosphothreonine. Phosphoserine is present on Ser-702.

This sequence belongs to the class-II aminoacyl-tRNA synthetase family. As to quaternary structure, homodimer. ISGylated.

The protein resides in the cytoplasm. The catalysed reaction is tRNA(Thr) + L-threonine + ATP = L-threonyl-tRNA(Thr) + AMP + diphosphate + H(+). With respect to regulation, inhibited by borrelidin (BN, IC 50 is 7 nM), which binds to 4 distinct subsites in the protein, preventing binding of all 3 substrates. In terms of biological role, catalyzes the attachment of threonine to tRNA(Thr) in a two-step reaction: threonine is first activated by ATP to form Thr-AMP and then transferred to the acceptor end of tRNA(Thr). Also edits incorrectly charged tRNA(Thr) via its editing domain, at the post-transfer stage. This chain is Threonine--tRNA ligase 1, cytoplasmic, found in Homo sapiens (Human).